Here is a 261-residue protein sequence, read N- to C-terminus: Short chain dehydrogenase/reductase astE (261 aa).

Residues I24, D70, N97, and K131 each contribute to the NADP(+) site. Residues S150 and Y164 each act as proton donor in the active site. Residues Y164, K168, V197, and T199 each coordinate NADP(+). K168 (lowers pKa of active site Tyr) is an active-site residue.

This sequence belongs to the short-chain dehydrogenases/reductases (SDR) family.

Its pathway is secondary metabolite biosynthesis; terpenoid biosynthesis. Its function is as follows. Short chain dehydrogenase/reductase; part of the gene cluster that mediates the biosynthesis of astellolides, drimane-type sesquiterpene esters that show antimicrobial, anti-inflammatory, and anti-tumor activities. The first step in astellolide biosynthesis is performed by the sesquiterpene cyclase astC that catalyzes the formation of drimanyl pyrophosphate from farnesyl pyrophosphate. Drimanyl pyrophosphate is then dephosphorylated by the sesquiterpene phosphatase astI to produce drimanyl monophosphate which is further dephosphorylated to drim-8-ene-11-ol by atsK. Drim-8-ene-11-ol is converted to confertifolin, probably by the cytochrome P450 monooxygenase astD and/or the dehydrogenase astE. The cytochrome P450 monooxygenases astB, astF and astJ then hydroxylate confertifolin at C6, C14, or C15 to form trihydroxy confertifolin. The nonribosomal peptide synthetase astA catalyzes ester bond formation between trihydroxy contifolin and benzoic acid (BA) or 4-hydroxy benzoic acid (4HBA), leading to the formation of dideacetyl astellolides A and B, respectively. Finally, the O-acetyltransferase astG converts dideacetyl astellolides A and B into deacetyl astellolides A and B. In Aspergillus oryzae (strain ATCC 42149 / RIB 40) (Yellow koji mold), this protein is Short chain dehydrogenase/reductase astE.